The following is a 354-amino-acid chain: DNA polymerase IV (354 aa).

The region spanning 7 to 188 (IIHVDMDCFF…LPLAKIPGVG (182 aa)) is the UmuC domain. The Mg(2+) site is built by aspartate 11 and aspartate 106. Glutamate 107 is an active-site residue.

It belongs to the DNA polymerase type-Y family. Monomer. Mg(2+) is required as a cofactor.

The protein localises to the cytoplasm. The catalysed reaction is DNA(n) + a 2'-deoxyribonucleoside 5'-triphosphate = DNA(n+1) + diphosphate. Poorly processive, error-prone DNA polymerase involved in untargeted mutagenesis. Copies undamaged DNA at stalled replication forks, which arise in vivo from mismatched or misaligned primer ends. These misaligned primers can be extended by PolIV. Exhibits no 3'-5' exonuclease (proofreading) activity. May be involved in translesional synthesis, in conjunction with the beta clamp from PolIII. This Shigella boydii serotype 18 (strain CDC 3083-94 / BS512) protein is DNA polymerase IV.